The primary structure comprises 476 residues: Cytosolic iron-sulfur assembly component 3 (476 aa).

The residue at position 2 (Ala2) is an N-acetylalanine. Residues Cys24, Cys71, Cys74, Cys77, Cys190, Cys246, Cys395, and Cys399 each contribute to the [4Fe-4S] cluster site.

This sequence belongs to the NARF family. In terms of assembly, external component of the CIA complex. In the CIA complex, interacts directly with CIAO1 and MMS19.

Functionally, component of the cytosolic iron-sulfur protein assembly (CIA) complex, a multiprotein complex that mediates the incorporation of iron-sulfur cluster into extramitochondrial Fe/S proteins. Seems to negatively regulate the level of HIF1A expression, although this effect could be indirect. The sequence is that of Cytosolic iron-sulfur assembly component 3 from Pongo abelii (Sumatran orangutan).